We begin with the raw amino-acid sequence, 150 residues long: Transcriptional repressor NrdR (150 aa).

A zinc finger spans residues 3 to 34; it reads CPYCQFEDTRVIDSRLASEGEQVRRRRECNRC. An ATP-cone domain is found at 49–139; that stretch reads PRIVKRDGTR…VYRSFEDVSA (91 aa).

The protein belongs to the NrdR family. Zn(2+) is required as a cofactor.

In terms of biological role, negatively regulates transcription of bacterial ribonucleotide reductase nrd genes and operons by binding to NrdR-boxes. This is Transcriptional repressor NrdR from Alkalilimnicola ehrlichii (strain ATCC BAA-1101 / DSM 17681 / MLHE-1).